The primary structure comprises 452 residues: Bifunctional protein GlmU (452 aa).

Residues 1 to 226 (MAFSVVVLAA…AVEVEGVNNR (226 aa)) form a pyrophosphorylase region. UDP-N-acetyl-alpha-D-glucosamine-binding positions include 8–11 (LAAG), Lys-22, Gln-73, and 78–79 (GT). Asp-102 is a Mg(2+) binding site. Residues Gly-137, Glu-151, Asn-166, and Asn-224 each coordinate UDP-N-acetyl-alpha-D-glucosamine. Asn-224 contacts Mg(2+). The interval 227–247 (LQLANLERALQNRQADELMTN) is linker. The tract at residues 248 to 452 (GVTLLDPSRF…IPNWPRPTKK (205 aa)) is N-acetyltransferase. Positions 330 and 348 each coordinate UDP-N-acetyl-alpha-D-glucosamine. His-360 serves as the catalytic Proton acceptor. 2 residues coordinate UDP-N-acetyl-alpha-D-glucosamine: Tyr-363 and Asn-374. Acetyl-CoA-binding positions include Ala-377, 383–384 (NY), Ser-402, Ala-420, and Arg-437.

The protein in the N-terminal section; belongs to the N-acetylglucosamine-1-phosphate uridyltransferase family. In the C-terminal section; belongs to the transferase hexapeptide repeat family. As to quaternary structure, homotrimer. It depends on Mg(2+) as a cofactor.

The protein resides in the cytoplasm. It carries out the reaction alpha-D-glucosamine 1-phosphate + acetyl-CoA = N-acetyl-alpha-D-glucosamine 1-phosphate + CoA + H(+). The catalysed reaction is N-acetyl-alpha-D-glucosamine 1-phosphate + UTP + H(+) = UDP-N-acetyl-alpha-D-glucosamine + diphosphate. It participates in nucleotide-sugar biosynthesis; UDP-N-acetyl-alpha-D-glucosamine biosynthesis; N-acetyl-alpha-D-glucosamine 1-phosphate from alpha-D-glucosamine 6-phosphate (route II): step 2/2. It functions in the pathway nucleotide-sugar biosynthesis; UDP-N-acetyl-alpha-D-glucosamine biosynthesis; UDP-N-acetyl-alpha-D-glucosamine from N-acetyl-alpha-D-glucosamine 1-phosphate: step 1/1. The protein operates within bacterial outer membrane biogenesis; LPS lipid A biosynthesis. In terms of biological role, catalyzes the last two sequential reactions in the de novo biosynthetic pathway for UDP-N-acetylglucosamine (UDP-GlcNAc). The C-terminal domain catalyzes the transfer of acetyl group from acetyl coenzyme A to glucosamine-1-phosphate (GlcN-1-P) to produce N-acetylglucosamine-1-phosphate (GlcNAc-1-P), which is converted into UDP-GlcNAc by the transfer of uridine 5-monophosphate (from uridine 5-triphosphate), a reaction catalyzed by the N-terminal domain. This Alteromonas mediterranea (strain DSM 17117 / CIP 110805 / LMG 28347 / Deep ecotype) protein is Bifunctional protein GlmU.